A 2256-amino-acid polypeptide reads, in one-letter code: Death-inducer obliterator 1 (2256 aa).

The residue at position 1 (Met-1) is an N-acetylmethionine. Residues 1–25 (MDDKGHLSNEEAPKAIKPTSKEFRK) are compositionally biased toward basic and acidic residues. Residues 1–256 (MDDKGHLSNE…NPREAGKPKP (256 aa)) form a disordered region. 2 stretches are compositionally biased toward polar residues: residues 48-59 (SEQQPQQHNLSL) and 96-119 (EPTS…SSEI). Ser-58 and Ser-112 each carry phosphoserine. Over residues 128-142 (LGKEHPASSEKAKGG) the composition is skewed to basic and acidic residues. Positions 143-153 (EEEEDTSDSDS) are enriched in acidic residues. Thr-148 carries the post-translational modification Phosphothreonine. Phosphoserine occurs at positions 149 and 151. 2 consecutive short sequence motifs (nuclear localization signal) follow at residues 162 to 170 (QNRLRRKRE) and 182 to 190 (QNRLRKKRR). Residues 169 to 178 (REQEPVERSL) show a composition bias toward basic and acidic residues. Basic and acidic residues-rich tracts occupy residues 206-216 (EQDRPLCKQEP) and 246-256 (ENPREAGKPKP). The PHD-type zinc-finger motif lies at 265–319 (ALYCICRQPHNNRFMICCDRCEEWFHGDCVGISEARGRLLERNGEDYICPNCTIL). Disordered stretches follow at residues 481 to 535 (LASR…DDRR), 598 to 624 (RPWP…ASKK), 641 to 668 (ANVP…SQIR), 778 to 822 (SRTK…PEKS), 856 to 970 (QVPS…TALS), 1011 to 1039 (AKPS…PPEG), and 1197 to 1218 (PSSA…QEEL). Residues 495-506 (ESSTPSWASDHN) are compositionally biased toward polar residues. Phosphoserine is present on Ser-522. Residues 667–787 (IRQNIRRSLK…SRTKLLNESK (121 aa)) enclose the TFIIS central domain. A compositionally biased stretch (basic and acidic residues) spans 778–788 (SRTKLLNESKK). The segment covering 797–812 (PDMEDSPPVSDSEEQQ) has biased composition (acidic residues). Phosphoserine occurs at positions 802 and 806. 2 stretches are compositionally biased toward basic and acidic residues: residues 875-886 (SKKEDFKPRHDS) and 921-935 (QERK…DSHP). Lys-876 is covalently cross-linked (Glycyl lysine isopeptide (Lys-Gly) (interchain with G-Cter in SUMO2)). Ser-886 carries the post-translational modification Phosphoserine. Residues 937–962 (PSSLGGLSPSSASGGSGVVTTVTMSG) are compositionally biased toward low complexity. A phosphoserine mark is found at Ser-1016, Ser-1027, and Ser-1035. A compositionally biased stretch (basic and acidic residues) spans 1202 to 1215 (ELDKTDEKRTRLQQ). Tyr-1239 is modified (phosphotyrosine). A disordered region spans residues 1245 to 1288 (DTAATSTTPPGSPPPPPPLPEPPVLKILSSLKPGSTSTVTAPTT). Phosphothreonine is present on Thr-1252. Pro residues predominate over residues 1254 to 1267 (PGSPPPPPPLPEPP). Ser-1256 bears the Phosphoserine mark. Residues 1279–1288 (STSTVTAPTT) are compositionally biased toward low complexity. Ser-1307 carries the phosphoserine modification. Disordered regions lie at residues 1320–1347 (KKSF…KGED), 1362–1421 (FGQF…VAYD), 1509–1609 (SDAL…EAKE), and 1630–2256 (QKCE…AAQA). Residues 1371–1387 (LEEEEEDDRPYDPEEEY) are compositionally biased toward acidic residues. The residue at position 1514 (Ser-1514) is a Phosphoserine. The segment covering 1526 to 1546 (LFSQEQQAPDPSQGAPNTNHN) has biased composition (polar residues). A compositionally biased stretch (basic and acidic residues) spans 1547-1557 (LDSRQSRDPRQ). Residues 1649-1666 (PTAGDGAARPAPPRRVLL) show a composition bias toward low complexity. Positions 1667-1679 (PTPPSTTFPPSFP) are enriched in pro residues. Residues 1699 to 1712 (TFMSQETSLGSSQY) show a composition bias toward polar residues. Ser-1726 carries the post-translational modification Phosphoserine. Over residues 1783-1792 (FPGPRGPVPP) the composition is skewed to pro residues. An Omega-N-methylarginine modification is found at Arg-1848. The span at 1855–1869 (FEDRKDPHGEKREFQ) shows a compositional bias: basic and acidic residues. Asymmetric dimethylarginine occurs at positions 1904, 1905, 1988, 1993, 2004, 2019, and 2035. 2 stretches are compositionally biased toward basic and acidic residues: residues 2081-2113 (EFRE…KPLD) and 2123-2246 (RQGR…EART).

Interacts specifically (via PHD-type zinc finger) with histone H3 that is trimethylated at 'Lys-4' (H3K4me3), histone phosphorylation at 'Thr-3' or 'Thr-6' disrupts this binding and promotes translocation of DIDO1 from chromatin to the mitotic spindle during mitosis. Ubiquitous. Expressed at intermediate levels.

It localises to the cytoplasm. The protein resides in the nucleus. The protein localises to the cytoskeleton. It is found in the spindle. In terms of biological role, required for early embryonic stem cell development. Putative transcription factor, weakly pro-apoptotic when overexpressed. This is Death-inducer obliterator 1 (Dido1) from Mus musculus (Mouse).